Reading from the N-terminus, the 145-residue chain is Cystatin-like 1 (145 aa).

The signal sequence occupies residues 1–19 (MGIGCWRNPLLLLIALVLS). The Cystatin domain maps to 37–115 (SKKNMNSTLN…KKLRKSLICE (79 aa)). Residue asparagine 42 is glycosylated (N-linked (GlcNAc...) asparagine). Cystine bridges form between cysteine 91–cysteine 101 and cysteine 114–cysteine 134.

The protein belongs to the cystatin family.

The protein localises to the secreted. This Homo sapiens (Human) protein is Cystatin-like 1 (CSTL1).